The sequence spans 363 residues: MGIKGLKPLLRSYGVHEYTVPLSQMSGKTIAVDGTFLLHKYKNCHSVPWHYLTLYTLSNLRLRNVKVLFIFDGMSPPEKSREKSNRRCRKQALMEKGTLVKAQLEVWKKDGGEQAPELAAVSERLVKTRGLDPSLTDPETVQVLTDYVDNMSRDTRVTSDDYELMRRSLDAFGFPYADAPDEAELCCVRVVQMGIADAPMTIDSDALACGALHGVDVVYTDLHGETLTAMSTSKSKEALGLNGEQFMDLCVMCGTDFNQRVHKLGPVTALKLIKAHGSIENIPSAAPSMSCLEAVRTREILSGGDMESRRKDYEAMVQKPVSAELIRSVFPPEFLDKLLHENWQLRDAMKRMAPEAFEKCKRK.

Belongs to the XPG/RAD2 endonuclease family. The cofactor is Mg(2+).

It is found in the host nucleus. Probable endonuclease. This is Putative RAD2-like endonuclease 095R from Frog virus 3 (isolate Goorha) (FV-3).